We begin with the raw amino-acid sequence, 250 residues long: F-box only protein 17 (250 aa).

The 48-residue stretch at 15–62 (HMALAELPPELLLQVLSHVPPRALVTRCRPVCRAWRDLVDGPSVWLLQ) folds into the F-box domain. In terms of domain architecture, FBA spans 99–250 (FCLLAPLGRN…GLLQGLSRLH (152 aa)).

Part of a SCF (SKP1-cullin-F-box) protein ligase complex. Interacts with SKP1 and CUL1.

Its function is as follows. Substrate-recognition component of the SCF (SKP1-CUL1-F-box protein)-type E3 ubiquitin ligase complex. Able to recognize and bind denatured glycoproteins, which are modified with complex-type oligosaccharides. Also recognizes sulfated glycans. Does not bind high-mannose glycoproteins. The chain is F-box only protein 17 (Fbxo17) from Rattus norvegicus (Rat).